A 397-amino-acid polypeptide reads, in one-letter code: Transcription factor TGAL6 (397 aa).

The 45-residue stretch at 104–148 folds into the bZIP domain; the sequence is PDKVLRRLAQNREAARKSRLRKKAYIQQLETSRLKLAQLEQELQR. Residues 106–126 are basic motif; it reads KVLRRLAQNREAARKSRLRKK. Residues 132–146 form a leucine-zipper region; sequence LETSRLKLAQLEQEL. The 216-residue stretch at 175 to 390 folds into the DOG1 domain; the sequence is ALGFEIKYSH…RALSSLWAAR (216 aa).

It belongs to the bZIP family.

The protein resides in the nucleus. Transcriptional regulator involved in defense response. In Oryza sativa subsp. japonica (Rice), this protein is Transcription factor TGAL6.